We begin with the raw amino-acid sequence, 336 residues long: GTP 3',8-cyclase (336 aa).

The Radical SAM core domain maps to 17–238 (GFSRRFHYLR…WTQQNRNLTD (222 aa)). Arg26 serves as a coordination point for GTP. Cys33 and Cys37 together coordinate [4Fe-4S] cluster. Tyr39 contacts S-adenosyl-L-methionine. Cys40 contacts [4Fe-4S] cluster. Arg75 contacts GTP. S-adenosyl-L-methionine is bound at residue Gly79. Thr106 provides a ligand contact to GTP. Residue Ser130 participates in S-adenosyl-L-methionine binding. Lys167 is a binding site for GTP. S-adenosyl-L-methionine is bound at residue Met201. [4Fe-4S] cluster contacts are provided by Cys264 and Cys267. Residue 269–271 (RLR) participates in GTP binding. Cys281 contacts [4Fe-4S] cluster.

Belongs to the radical SAM superfamily. MoaA family. As to quaternary structure, monomer and homodimer. Requires [4Fe-4S] cluster as cofactor.

The enzyme catalyses GTP + AH2 + S-adenosyl-L-methionine = (8S)-3',8-cyclo-7,8-dihydroguanosine 5'-triphosphate + 5'-deoxyadenosine + L-methionine + A + H(+). The protein operates within cofactor biosynthesis; molybdopterin biosynthesis. Functionally, catalyzes the cyclization of GTP to (8S)-3',8-cyclo-7,8-dihydroguanosine 5'-triphosphate. In Tolumonas auensis (strain DSM 9187 / NBRC 110442 / TA 4), this protein is GTP 3',8-cyclase.